The sequence spans 411 residues: Lissencephaly-1 homolog (411 aa).

The 33-residue stretch at 9–41 folds into the LisH domain; it reads QREELNQAIADYLGSNGYADSLETFRKEADLST. The stretch at 56 to 83 forms a coiled coil; the sequence is TSVIRLQKKVMELEAKLTEAEKEVIEGA. 7 WD repeats span residues 106 to 147, 148 to 187, 191 to 230, 233 to 272, 275 to 334, 337 to 376, and 379 to 411; these read GHRA…RSLK, GHTD…ECIK, GHDH…CVKT, GHRE…CKVE, DHEH…CLLT, GHDN…CMKT, and AHQH…WECR.

Belongs to the WD repeat LIS1/nudF family.

The protein localises to the cytoplasm. It is found in the cytoskeleton. Its subcellular location is the microtubule organizing center. The protein resides in the centrosome. In terms of biological role, positively regulates the activity of the minus-end directed microtubule motor protein dynein. May enhance dynein-mediated microtubule sliding by targeting dynein to the microtubule plus end. Required for several dynein- and microtubule-dependent processes. This Drosophila yakuba (Fruit fly) protein is Lissencephaly-1 homolog.